The following is a 513-amino-acid chain: ATP synthase subunit alpha (513 aa).

Position 169 to 176 (169 to 176) interacts with ATP; sequence GDRQCGKT.

This sequence belongs to the ATPase alpha/beta chains family. F-type ATPases have 2 components, CF(1) - the catalytic core - and CF(0) - the membrane proton channel. CF(1) has five subunits: alpha(3), beta(3), gamma(1), delta(1), epsilon(1). CF(0) has three main subunits: a(1), b(2) and c(9-12). The alpha and beta chains form an alternating ring which encloses part of the gamma chain. CF(1) is attached to CF(0) by a central stalk formed by the gamma and epsilon chains, while a peripheral stalk is formed by the delta and b chains.

The protein localises to the cell inner membrane. It carries out the reaction ATP + H2O + 4 H(+)(in) = ADP + phosphate + 5 H(+)(out). In terms of biological role, produces ATP from ADP in the presence of a proton gradient across the membrane. The alpha chain is a regulatory subunit. This is ATP synthase subunit alpha from Burkholderia cenocepacia (strain ATCC BAA-245 / DSM 16553 / LMG 16656 / NCTC 13227 / J2315 / CF5610) (Burkholderia cepacia (strain J2315)).